The following is a 339-amino-acid chain: Thymidine kinase (339 aa).

11–18 provides a ligand contact to ATP; the sequence is GAFGIGKT. Glu39 serves as the catalytic Proton acceptor. Substrate contacts are provided by Tyr59 and Gln83. Residue Arg176 coordinates ATP. Arg182 lines the substrate pocket.

The protein belongs to the herpesviridae thymidine kinase family. As to quaternary structure, homodimer.

It carries out the reaction thymidine + ATP = dTMP + ADP + H(+). Its function is as follows. Catalyzes the transfer of the gamma-phospho group of ATP to thymidine to generate dTMP in the salvage pathway of pyrimidine synthesis. The dTMP serves as a substrate for DNA polymerase during viral DNA replication. Allows the virus to be reactivated and to grow in non-proliferative cells lacking a high concentration of phosphorylated nucleic acid precursors. This is Thymidine kinase from Amazona oratrix (yellow-headed parrot).